Reading from the N-terminus, the 179-residue chain is Translation initiation factor IF-3 (179 aa).

Belongs to the IF-3 family. In terms of assembly, monomer.

Its subcellular location is the cytoplasm. Functionally, IF-3 binds to the 30S ribosomal subunit and shifts the equilibrium between 70S ribosomes and their 50S and 30S subunits in favor of the free subunits, thus enhancing the availability of 30S subunits on which protein synthesis initiation begins. This Leptospira interrogans serogroup Icterohaemorrhagiae serovar copenhageni (strain Fiocruz L1-130) protein is Translation initiation factor IF-3.